Here is a 334-residue protein sequence, read N- to C-terminus: Holliday junction branch migration complex subunit RuvB (334 aa).

Residues 1–182 (MDERLVSSEL…FGVLSRLEYY (182 aa)) are large ATPase domain (RuvB-L). ATP contacts are provided by residues Leu21, Arg22, Gly63, Lys66, Thr67, Thr68, 129-131 (EDF), Arg172, Tyr182, and Arg219. Residue Thr67 coordinates Mg(2+). Residues 183-253 (TRDELSEIVI…VAVDALERLQ (71 aa)) are small ATPAse domain (RuvB-S). Residues 256–334 (KLGLDHIDRK…HFKMEVPNHD (79 aa)) are head domain (RuvB-H). DNA-binding residues include Arg311 and Arg316.

The protein belongs to the RuvB family. Homohexamer. Forms an RuvA(8)-RuvB(12)-Holliday junction (HJ) complex. HJ DNA is sandwiched between 2 RuvA tetramers; dsDNA enters through RuvA and exits via RuvB. An RuvB hexamer assembles on each DNA strand where it exits the tetramer. Each RuvB hexamer is contacted by two RuvA subunits (via domain III) on 2 adjacent RuvB subunits; this complex drives branch migration. In the full resolvosome a probable DNA-RuvA(4)-RuvB(12)-RuvC(2) complex forms which resolves the HJ.

Its subcellular location is the cytoplasm. The enzyme catalyses ATP + H2O = ADP + phosphate + H(+). The RuvA-RuvB-RuvC complex processes Holliday junction (HJ) DNA during genetic recombination and DNA repair, while the RuvA-RuvB complex plays an important role in the rescue of blocked DNA replication forks via replication fork reversal (RFR). RuvA specifically binds to HJ cruciform DNA, conferring on it an open structure. The RuvB hexamer acts as an ATP-dependent pump, pulling dsDNA into and through the RuvAB complex. RuvB forms 2 homohexamers on either side of HJ DNA bound by 1 or 2 RuvA tetramers; 4 subunits per hexamer contact DNA at a time. Coordinated motions by a converter formed by DNA-disengaged RuvB subunits stimulates ATP hydrolysis and nucleotide exchange. Immobilization of the converter enables RuvB to convert the ATP-contained energy into a lever motion, pulling 2 nucleotides of DNA out of the RuvA tetramer per ATP hydrolyzed, thus driving DNA branch migration. The RuvB motors rotate together with the DNA substrate, which together with the progressing nucleotide cycle form the mechanistic basis for DNA recombination by continuous HJ branch migration. Branch migration allows RuvC to scan DNA until it finds its consensus sequence, where it cleaves and resolves cruciform DNA. The sequence is that of Holliday junction branch migration complex subunit RuvB from Bacillus licheniformis (strain ATCC 14580 / DSM 13 / JCM 2505 / CCUG 7422 / NBRC 12200 / NCIMB 9375 / NCTC 10341 / NRRL NRS-1264 / Gibson 46).